Here is a 296-residue protein sequence, read N- to C-terminus: Thymidylate synthase (296 aa).

DUMP is bound by residues Arg23 and 157-158 (RR). Residue Cys177 is the Nucleophile of the active site. Residues 198–201 (RSAD), Asn209, and 239–241 (HIY) contribute to the dUMP site. Residue Asp201 participates in (6R)-5,10-methylene-5,6,7,8-tetrahydrofolate binding. Ala295 provides a ligand contact to (6R)-5,10-methylene-5,6,7,8-tetrahydrofolate.

This sequence belongs to the thymidylate synthase family. Bacterial-type ThyA subfamily. Homodimer.

It is found in the cytoplasm. It carries out the reaction dUMP + (6R)-5,10-methylene-5,6,7,8-tetrahydrofolate = 7,8-dihydrofolate + dTMP. It participates in pyrimidine metabolism; dTTP biosynthesis. Functionally, catalyzes the reductive methylation of 2'-deoxyuridine-5'-monophosphate (dUMP) to 2'-deoxythymidine-5'-monophosphate (dTMP) while utilizing 5,10-methylenetetrahydrofolate (mTHF) as the methyl donor and reductant in the reaction, yielding dihydrofolate (DHF) as a by-product. This enzymatic reaction provides an intracellular de novo source of dTMP, an essential precursor for DNA biosynthesis. This is Thymidylate synthase from Zymomonas mobilis subsp. mobilis (strain ATCC 31821 / ZM4 / CP4).